The following is a 136-amino-acid chain: Small ribosomal subunit protein eS8 (136 aa).

It belongs to the eukaryotic ribosomal protein eS8 family. In terms of assembly, part of the 30S ribosomal subunit.

The chain is Small ribosomal subunit protein eS8 (rps8e) from Aeropyrum pernix (strain ATCC 700893 / DSM 11879 / JCM 9820 / NBRC 100138 / K1).